A 239-amino-acid polypeptide reads, in one-letter code: Ribonuclease PH (239 aa).

Phosphate is bound by residues Arg86 and 124–126 (GTR).

This sequence belongs to the RNase PH family. In terms of assembly, homohexameric ring arranged as a trimer of dimers.

It catalyses the reaction tRNA(n+1) + phosphate = tRNA(n) + a ribonucleoside 5'-diphosphate. Phosphorolytic 3'-5' exoribonuclease that plays an important role in tRNA 3'-end maturation. Removes nucleotide residues following the 3'-CCA terminus of tRNAs; can also add nucleotides to the ends of RNA molecules by using nucleoside diphosphates as substrates, but this may not be physiologically important. Probably plays a role in initiation of 16S rRNA degradation (leading to ribosome degradation) during starvation. This Sinorhizobium fredii (strain NBRC 101917 / NGR234) protein is Ribonuclease PH.